We begin with the raw amino-acid sequence, 156 residues long: Calmodulin (156 aa).

The residue at position 2 (S2) is an N-acetylserine. EF-hand domains follow at residues 15–50 (EQIA…LGQN), 51–86 (PTEA…KMKD), 88–123 (DSEE…LGEK), and 124–156 (LTDE…MTSK). The Ca(2+) site is built by D28, D30, D32, T34, E39, D64, D66, N68, T70, E75, D101, D103, N105, and E112. Residue K123 is modified to N6,N6,N6-trimethyllysine. Residues D137, D139, D141, Q143, and E148 each coordinate Ca(2+).

The protein belongs to the calmodulin family.

In terms of biological role, calmodulin mediates the control of a large number of enzymes, ion channels and other proteins by Ca(2+). Among the enzymes to be stimulated by the calmodulin-Ca(2+) complex are a number of protein kinases and phosphatases. The sequence is that of Calmodulin from Strongylocentrotus intermedius (Sea urchin).